The following is a 354-amino-acid chain: Chorismate synthase (354 aa).

The NADP(+) site is built by arginine 48 and arginine 54. Residues 125-127, 238-239, glycine 278, 293-297, and arginine 319 each bind FMN; these read RSS, NA, and KPTSS.

The protein belongs to the chorismate synthase family. As to quaternary structure, homotetramer. FMNH2 is required as a cofactor.

The enzyme catalyses 5-O-(1-carboxyvinyl)-3-phosphoshikimate = chorismate + phosphate. It participates in metabolic intermediate biosynthesis; chorismate biosynthesis; chorismate from D-erythrose 4-phosphate and phosphoenolpyruvate: step 7/7. Catalyzes the anti-1,4-elimination of the C-3 phosphate and the C-6 proR hydrogen from 5-enolpyruvylshikimate-3-phosphate (EPSP) to yield chorismate, which is the branch point compound that serves as the starting substrate for the three terminal pathways of aromatic amino acid biosynthesis. This reaction introduces a second double bond into the aromatic ring system. In Buchnera aphidicola subsp. Acyrthosiphon pisum (strain 5A), this protein is Chorismate synthase.